Consider the following 130-residue polypeptide: Small ribosomal subunit protein uS8 (130 aa).

The protein belongs to the universal ribosomal protein uS8 family. Part of the 30S ribosomal subunit. Contacts proteins S5 and S12.

Functionally, one of the primary rRNA binding proteins, it binds directly to 16S rRNA central domain where it helps coordinate assembly of the platform of the 30S subunit. This chain is Small ribosomal subunit protein uS8, found in Pasteurella multocida (strain Pm70).